The primary structure comprises 253 residues: Demethylmenaquinone methyltransferase (253 aa).

Residues T75, D96, and 124–125 (DA) each bind S-adenosyl-L-methionine.

This sequence belongs to the class I-like SAM-binding methyltransferase superfamily. MenG/UbiE family.

It carries out the reaction a 2-demethylmenaquinol + S-adenosyl-L-methionine = a menaquinol + S-adenosyl-L-homocysteine + H(+). The protein operates within quinol/quinone metabolism; menaquinone biosynthesis; menaquinol from 1,4-dihydroxy-2-naphthoate: step 2/2. In terms of biological role, methyltransferase required for the conversion of demethylmenaquinol (DMKH2) to menaquinol (MKH2). The sequence is that of Demethylmenaquinone methyltransferase from Desulfitobacterium hafniense (strain Y51).